Reading from the N-terminus, the 685-residue chain is Protein hook (685 aa).

The Calponin-homology (CH) domain occupies 6-122 (MEIYESLIRW…RLLQLILGCA (117 aa)). Positions 134–570 (QIMELEESLQ…LLAADSRYKK (437 aa)) form a coiled coil. 3 disordered regions span residues 430 to 449 (AAED…SSDV), 593 to 625 (LEKP…SGRV), and 661 to 685 (PGQS…FAKK). A compositionally biased stretch (low complexity) spans 602–623 (ASSSSATGSGGDASTLTSTGSG). A compositionally biased stretch (polar residues) spans 661–670 (PGQSFLSRQR).

It belongs to the hook family. Homodimer. Interacts with microtubules via its N-terminus.

It localises to the cytoplasm. Its subcellular location is the cytoskeleton. It is found in the endosome. Involved in endocytic trafficking. Probably acts as a cytoskeletal linker protein that tethers endosome vesicles to the cytoskeleton. This chain is Protein hook, found in Aedes aegypti (Yellowfever mosquito).